A 246-amino-acid polypeptide reads, in one-letter code: Acetoacetate decarboxylase (246 aa).

Lysine 116 (schiff-base intermediate with acetoacetate) is an active-site residue.

It belongs to the ADC family.

The catalysed reaction is acetoacetate + H(+) = acetone + CO2. Its function is as follows. Catalyzes the conversion of acetoacetate to acetone and carbon dioxide. This is Acetoacetate decarboxylase from Burkholderia cenocepacia (strain ATCC BAA-245 / DSM 16553 / LMG 16656 / NCTC 13227 / J2315 / CF5610) (Burkholderia cepacia (strain J2315)).